The chain runs to 149 residues: Proline-rich acidic protein 1 (149 aa).

The signal sequence occupies residues 1-20; sequence MKRFLLATCLVAALLWEAGA. 2 disordered regions span residues 51-79 and 97-122; these read EPLEKDNQLGPLLPEPKQKPAAAEEKRPD and LQGPELDLDSIDHPMSDDVQDEEVPQ. Basic and acidic residues predominate over residues 66–79; it reads PKQKPAAAEEKRPD.

In terms of assembly, interacts with MTTP. Interacts with MAD1L1. Predominantly expressed in the intestinal epithelial cells than in the liver (at protein level). Abundantly expressed in the uterus during late pregnancy by uterus epithelial cells. After birth expression rapidly decreases and is no longer found in the uterus by the third day. Also highly expressed in the small intestine where it shows a proximal-distal graded expression.

The protein localises to the secreted. The protein resides in the endoplasmic reticulum. Its function is as follows. Lipid-binding protein which promotes lipid absorption by facilitating MTTP-mediated lipid transfer (mainly triglycerides and phospholipids) and MTTP-mediated apoB lipoprotein assembly and secretion. Protects the gastrointestinal epithelium from irradiation-induced apoptosis. May play an important role in maintaining normal growth homeostasis in epithelial cells. Involved in p53/TP53-dependent cell survival after DNA damage. The chain is Proline-rich acidic protein 1 (Prap1) from Mus musculus (Mouse).